Here is a 412-residue protein sequence, read N- to C-terminus: Burnettramic acids biosynthesis cluster protein E (412 aa).

Disordered regions lie at residues 1-66 (MAIA…KKIR), 308-342 (RNPT…SLAT), and 386-412 (SRAE…AAKG). The segment covering 36-58 (EDEQWALDELQDELCQEEPSDSE) has biased composition (acidic residues). Polar residues predominate over residues 395–404 (EATTEPSVQS).

The protein operates within mycotoxin biosynthesis. Part of the gene cluster that mediates the biosynthesis of burnettramic acids, an unusual class of bolaamphiphilic pyrrolizidinediones that display potent antibacterial, antifungal, and cytotoxic activities. The first step of the biosynthesis of burnettramic acids is the hydroxylation of proline by the proline hydroxylase buaE to generate 4-hydroxyproline. The PKS-NRPS buaA and trans-enoyl reductase buaC construct the highly reduced polyketide chain, and the condensation (C) domain of buaA then catalyzes the amide bond formation with the activated 4-hydroxyproline. This is followed by the R domain releasing the nascent polyketide-peptide directly via a Dieckmann condensation to afford a tetramic acid fused to the hydroxyproline, generating the bicyclic pyrrolidinedione moiety. The cytochrome P450 monooxygenases buaD and buaG are likely responsible for the multiple hydroxylations on the polyketide chain and its terminus, although in the heterologous context, buaD does not appear to be required. Therefore, while buaG may be a multifunctional cytochrome P450 monooxygenase, it cannot be ruled out that the two secondary alcohols on the polyketide chain could have an acetate origin. Finally, the glycosyltransferase buaB transfers beta-D-mannose to the aglycone burnettramic acid A to form burnettramic acid A. Burnettramic acid B is a minor cis-pyrrolizidine epimer of burnettramic acid A and it is likely that small amounts of it form naturally in acidic environments. The role of the uncharacterized protein buaF in the biosynthesis of burnettramic acids has still to be determined. In Petromyces alliaceus (Aspergillus alliaceus), this protein is Burnettramic acids biosynthesis cluster protein E.